The following is a 322-amino-acid chain: Replication factor C small subunit (322 aa).

50 to 57 (GPAGTGKT) contributes to the ATP binding site.

It belongs to the activator 1 small subunits family. RfcS subfamily. As to quaternary structure, heteromultimer composed of small subunits (RfcS) and large subunits (RfcL).

Its function is as follows. Part of the RFC clamp loader complex which loads the PCNA sliding clamp onto DNA. The protein is Replication factor C small subunit of Halobacterium salinarum (strain ATCC 700922 / JCM 11081 / NRC-1) (Halobacterium halobium).